The chain runs to 1829 residues: Unconventional myosin-Va (1829 aa).

The 53-residue stretch at 8–60 (TKYARVWIPDPEEVWKSAELLKDYKPGDKVLQLRLEEGKDLEYCLDPKTKELP) folds into the Myosin N-terminal SH3-like domain. Positions 69-764 (VGENDLTALS…QVAYLEKIRA (696 aa)) constitute a Myosin motor domain. Residue 163–170 (GESGAGKT) coordinates ATP. The disordered stretch occupies residues 599–635 (AISPTSATPSGRVPLSRTPVKPAKARPGQTSKEHKKT). The segment at 644–666 (LHLLMETLNATTPHYVRCIKPND) is actin-binding. IQ domains are found at residues 767–789 (LRAA…KYMR), 790–814 (MRRA…TFLR), 815–837 (RTRA…RYQC), 838–862 (MRDA…QMML), 863–887 (REHK…HRTL), and 888–915 (KAIV…EARS). 2 coiled-coil regions span residues 916 to 1239 (VERY…PEVT) and 1315 to 1419 (GLKE…ELEV). Disordered regions lie at residues 1106-1148 (IPKP…SEKK) and 1170-1199 (KQSL…PIRG). Residues 1117–1131 (THSSNESEYTFSSEI) are compositionally biased toward polar residues. 2 stretches are compositionally biased toward basic and acidic residues: residues 1137 to 1148 (LPLRMEEPSEKK) and 1170 to 1196 (KQSL…ERPP). In terms of domain architecture, Dilute spans 1508 to 1784 (TSTINGIKKV…IRTIQLRLRD (277 aa)). Residue threonine 1734 is modified to Phosphothreonine.

Belongs to the TRAFAC class myosin-kinesin ATPase superfamily. Myosin family. May be a homodimer, which associates with multiple calmodulin or myosin light chains. As to expression, neuronal and non-neuronal cells of the brain.

The protein localises to the golgi apparatus membrane. It carries out the reaction ATP + H2O = ADP + phosphate + H(+). In terms of biological role, processive actin-based motor that can move in large steps approximating the 36-nm pseudo-repeat of the actin filament. Can hydrolyze ATP in the presence of actin, which is essential for its function as a motor protein. Involved in melanosome transport. Also mediates the transport of vesicles to the plasma membrane. May also be required for some polarization process involved in dendrite formation. The chain is Unconventional myosin-Va (MYO5A) from Gallus gallus (Chicken).